A 179-amino-acid chain; its full sequence is Large ribosomal subunit protein bL9 (179 aa).

The protein belongs to the bacterial ribosomal protein bL9 family.

In terms of biological role, binds to the 23S rRNA. The chain is Large ribosomal subunit protein bL9 from Bartonella bacilliformis (strain ATCC 35685 / KC583 / Herrer 020/F12,63).